A 488-amino-acid polypeptide reads, in one-letter code: ATP synthase subunit beta (488 aa).

ATP is bound at residue 155 to 162; the sequence is GGAGVGKT. The segment at 467 to 488 is disordered; that stretch reads GFAPDDQNTDADEKPAAQAAAN.

It belongs to the ATPase alpha/beta chains family. As to quaternary structure, F-type ATPases have 2 components, CF(1) - the catalytic core - and CF(0) - the membrane proton channel. CF(1) has five subunits: alpha(3), beta(3), gamma(1), delta(1), epsilon(1). CF(0) has three main subunits: a(1), b(2) and c(9-12). The alpha and beta chains form an alternating ring which encloses part of the gamma chain. CF(1) is attached to CF(0) by a central stalk formed by the gamma and epsilon chains, while a peripheral stalk is formed by the delta and b chains.

Its subcellular location is the cell membrane. It carries out the reaction ATP + H2O + 4 H(+)(in) = ADP + phosphate + 5 H(+)(out). Produces ATP from ADP in the presence of a proton gradient across the membrane. The catalytic sites are hosted primarily by the beta subunits. The polypeptide is ATP synthase subunit beta (Lacticaseibacillus casei (strain BL23) (Lactobacillus casei)).